The chain runs to 329 residues: GTP 3',8-cyclase (329 aa).

One can recognise a Radical SAM core domain in the interval 8-234 (AFARKFYYLR…QLRQRSDGPA (227 aa)). GTP is bound at residue arginine 17. 2 residues coordinate [4Fe-4S] cluster: cysteine 24 and cysteine 28. Tyrosine 30 lines the S-adenosyl-L-methionine pocket. Position 31 (cysteine 31) interacts with [4Fe-4S] cluster. Arginine 68 is a binding site for GTP. Position 72 (glycine 72) interacts with S-adenosyl-L-methionine. Threonine 99 is a GTP binding site. Serine 123 serves as a coordination point for S-adenosyl-L-methionine. Residue lysine 160 participates in GTP binding. Methionine 194 is an S-adenosyl-L-methionine binding site. [4Fe-4S] cluster is bound by residues cysteine 257 and cysteine 260. Position 262 to 264 (262 to 264 (RLR)) interacts with GTP. Position 274 (cysteine 274) interacts with [4Fe-4S] cluster.

It belongs to the radical SAM superfamily. MoaA family. In terms of assembly, monomer and homodimer. [4Fe-4S] cluster serves as cofactor.

The enzyme catalyses GTP + AH2 + S-adenosyl-L-methionine = (8S)-3',8-cyclo-7,8-dihydroguanosine 5'-triphosphate + 5'-deoxyadenosine + L-methionine + A + H(+). It participates in cofactor biosynthesis; molybdopterin biosynthesis. Functionally, catalyzes the cyclization of GTP to (8S)-3',8-cyclo-7,8-dihydroguanosine 5'-triphosphate. In Escherichia coli O7:K1 (strain IAI39 / ExPEC), this protein is GTP 3',8-cyclase.